Reading from the N-terminus, the 334-residue chain is Adenosine deaminase (334 aa).

Positions 12 and 14 each coordinate Zn(2+). Substrate-binding residues include H14, D16, and G170. Residue H197 participates in Zn(2+) binding. E200 acts as the Proton donor in catalysis. D278 is a binding site for Zn(2+). D279 provides a ligand contact to substrate.

The protein belongs to the metallo-dependent hydrolases superfamily. Adenosine and AMP deaminases family. Adenosine deaminase subfamily. It depends on Zn(2+) as a cofactor.

It carries out the reaction adenosine + H2O + H(+) = inosine + NH4(+). The enzyme catalyses 2'-deoxyadenosine + H2O + H(+) = 2'-deoxyinosine + NH4(+). Functionally, catalyzes the hydrolytic deamination of adenosine and 2-deoxyadenosine. This Yersinia pseudotuberculosis serotype O:1b (strain IP 31758) protein is Adenosine deaminase.